We begin with the raw amino-acid sequence, 147 residues long: MSQNLTEEQIAEFKEAFALFDKDNSGSISASELATVMRSLGLSPSEAEVADLMNEIDVDGNHAIEFSEFLALMSRQLKCNDSEQELLEAFKVFDKNGDGLISAAELKHVLTSIGEKLTDAEVDEMLREVSDGSGEINIKQFAALLSK.

4 EF-hand domains span residues 8 to 43, 44 to 79, 81 to 116, and 120 to 147; these read EQIAEFKEAFALFDKDNSGSISASELATVMRSLGLS, PSEAEVADLMNEIDVDGNHAIEFSEFLALMSRQLKC, DSEQELLEAFKVFDKNGDGLISAAELKHVLTSIGEK, and AEVDEMLREVSDGSGEINIKQFAALLSK. Residues aspartate 21, aspartate 23, serine 25, serine 27, glutamate 32, aspartate 57, aspartate 59, asparagine 61, glutamate 68, aspartate 94, asparagine 96, aspartate 98, and glutamate 105 each contribute to the Ca(2+) site.

Belongs to the calmodulin family.

In terms of biological role, calmodulin mediates the control of a large number of enzymes, ion channels and other proteins by Ca(2+). Among the enzymes to be stimulated by the calmodulin-Ca(2+) complex are a number of protein kinases and phosphatases. This chain is Calmodulin (CMD1), found in Kluyveromyces lactis (strain ATCC 8585 / CBS 2359 / DSM 70799 / NBRC 1267 / NRRL Y-1140 / WM37) (Yeast).